Here is a 374-residue protein sequence, read N- to C-terminus: Putative phosphoserine aminotransferase (374 aa).

R48 is a binding site for L-glutamate. Pyridoxal 5'-phosphate is bound by residues 82-83, F106, T152, D174, and Q197; that span reads AT. At K198 the chain carries N6-(pyridoxal phosphate)lysine. 249–250 is a pyridoxal 5'-phosphate binding site; the sequence is NT.

It belongs to the class-V pyridoxal-phosphate-dependent aminotransferase family. SerC subfamily. In terms of assembly, homodimer. The cofactor is pyridoxal 5'-phosphate.

The protein localises to the cytoplasm. It catalyses the reaction O-phospho-L-serine + 2-oxoglutarate = 3-phosphooxypyruvate + L-glutamate. The enzyme catalyses 4-(phosphooxy)-L-threonine + 2-oxoglutarate = (R)-3-hydroxy-2-oxo-4-phosphooxybutanoate + L-glutamate. The protein operates within amino-acid biosynthesis; L-serine biosynthesis; L-serine from 3-phospho-D-glycerate: step 2/3. It participates in cofactor biosynthesis; pyridoxine 5'-phosphate biosynthesis; pyridoxine 5'-phosphate from D-erythrose 4-phosphate: step 3/5. Catalyzes the reversible conversion of 3-phosphohydroxypyruvate to phosphoserine and of 3-hydroxy-2-oxo-4-phosphonooxybutanoate to phosphohydroxythreonine. The protein is Putative phosphoserine aminotransferase of Mycobacterium avium (strain 104).